A 487-amino-acid chain; its full sequence is Probable Xaa-Pro aminopeptidase CPSG_02684 (487 aa).

Over residues 1-10 (MAGSNTLSSS) the composition is skewed to polar residues. Residues 1–22 (MAGSNTLSSSEHGDDPRGHSYS) form a disordered region. Mn(2+)-binding residues include Asp275, Asp286, Glu421, and Glu460.

This sequence belongs to the peptidase M24B family. Mn(2+) serves as cofactor.

The catalysed reaction is Release of any N-terminal amino acid, including proline, that is linked to proline, even from a dipeptide or tripeptide.. Its function is as follows. Catalyzes the removal of a penultimate prolyl residue from the N-termini of peptides. The protein is Probable Xaa-Pro aminopeptidase CPSG_02684 of Coccidioides posadasii (strain RMSCC 757 / Silveira) (Valley fever fungus).